A 274-amino-acid chain; its full sequence is Undecaprenyl-diphosphatase (274 aa).

The next 8 membrane-spanning stretches (helical) occupy residues 1–21 (MDWFYAIIYGIVEGITEFLPI), 48–68 (VVIQGGAILAVLAYYWRDFAG), 84–104 (LGVIVGVIPAVVLGVLFGDVI), 108–128 (LFRPSVVAWALIVGGVLMWVI), 143–163 (IGLGRAFLIGAAQCLALLWPG), 187–207 (FSFYLGIPTLGGAALLDFIKS), 214–234 (IGLLNVFLGAAVSFVVAYLAI), and 254–274 (VIFGLLILLLVASGRLANGGL).

It belongs to the UppP family.

It is found in the cell membrane. It catalyses the reaction di-trans,octa-cis-undecaprenyl diphosphate + H2O = di-trans,octa-cis-undecaprenyl phosphate + phosphate + H(+). Catalyzes the dephosphorylation of undecaprenyl diphosphate (UPP). Confers resistance to bacitracin. This Deinococcus geothermalis (strain DSM 11300 / CIP 105573 / AG-3a) protein is Undecaprenyl-diphosphatase.